The primary structure comprises 138 residues: Acidic phospholipase A2 Ts-A3 (138 aa).

The N-terminal stretch at 1 to 16 (MRTLWIMAVLLLGVEG) is a signal peptide. Cystine bridges form between Cys42–Cys132, Cys44–Cys60, Cys59–Cys111, Cys65–Cys138, Cys66–Cys104, Cys73–Cys97, and Cys91–Cys102. Positions 43, 45, and 47 each coordinate Ca(2+). The active site involves His63. A Ca(2+)-binding site is contributed by Asp64. The active site involves Asp105.

It depends on Ca(2+) as a cofactor. Expressed by the venom gland.

The protein localises to the secreted. It carries out the reaction a 1,2-diacyl-sn-glycero-3-phosphocholine + H2O = a 1-acyl-sn-glycero-3-phosphocholine + a fatty acid + H(+). Functionally, snake venom phospholipase A2 (PLA2) that shows a moderate inhibition of ADP-induced human platelet aggregation when tested on platelet rich plasma. Exhibits high hydrolytic activities and prefers the anionic micelles (dPPC with deoxycholate) to the zwitterionic micelles (dPPC with Triton X-100). PLA2 catalyzes the calcium-dependent hydrolysis of the 2-acyl groups in 3-sn-phosphoglycerides. This chain is Acidic phospholipase A2 Ts-A3, found in Trimeresurus stejnegeri (Chinese green tree viper).